The sequence spans 318 residues: Olfactory receptor 13C9 (318 aa).

The Extracellular portion of the chain corresponds to 1–25; the sequence is MEWENQTILVEFFLKGHSVHPRLEL. Asn5 carries an N-linked (GlcNAc...) asparagine glycan. Residues 26–46 form a helical membrane-spanning segment; the sequence is LFFVLIFIMYVVILLGNGTLI. Over 47–54 the chain is Cytoplasmic; that stretch reads LISILDPH. A helical transmembrane segment spans residues 55–75; sequence LHTPMYFFLGNLSFLDICYTT. The Extracellular segment spans residues 76–99; sequence TSIPSTLVSFLSERKTISFSGCAV. Cys97 and Cys189 are joined by a disulfide. Residues 100–120 traverse the membrane as a helical segment; it reads QMFLGLAMGTTECVLLGMMAF. Residues 121-139 are Cytoplasmic-facing; that stretch reads DRYVAICNPLRYPIIMSKN. A helical membrane pass occupies residues 140 to 160; that stretch reads AYVPMAVGSWFAGIVNSAVQT. At 161–197 the chain is on the extracellular side; it reads TFVVQLPFCRKNVINHFSCEILAVMKLACADISGNEF. A helical transmembrane segment spans residues 198–217; the sequence is LMLVATILFTLMPLLLIVIS. Topologically, residues 218–237 are cytoplasmic; it reads YSLIISSILKIHSSEGRSKA. Residues 238–258 form a helical membrane-spanning segment; it reads FSTCSAHLTVVIIFYGTILFM. Residues 259–277 lie on the Extracellular side of the membrane; that stretch reads YMKPKSKETLNSDDLDATD. The helical transmembrane segment at 278 to 298 threads the bilayer; the sequence is KIISMFYGVMTPMMNPLIYSL. Over 299–318 the chain is Cytoplasmic; that stretch reads RNKDVKEAVKHLPNRRFFSK.

This sequence belongs to the G-protein coupled receptor 1 family.

It is found in the cell membrane. Functionally, odorant receptor. The chain is Olfactory receptor 13C9 (OR13C9) from Homo sapiens (Human).